We begin with the raw amino-acid sequence, 292 residues long: Non-homologous end joining protein Ku (292 aa).

In terms of domain architecture, Ku spans 9–187 (ITFGLVNVPV…TVPPITEREL (179 aa)). Residues 264-285 (AASAFPAAEKAPAGKNAATASA) show a composition bias toward low complexity. The disordered stretch occupies residues 264-292 (AASAFPAAEKAPAGKNAATASAKKARKLA).

Belongs to the prokaryotic Ku family. As to quaternary structure, homodimer. Interacts with LigD.

With LigD forms a non-homologous end joining (NHEJ) DNA repair enzyme, which repairs dsDNA breaks with reduced fidelity. Binds linear dsDNA with 5'- and 3'- overhangs but not closed circular dsDNA nor ssDNA. Recruits and stimulates the ligase activity of LigD. In Leifsonia xyli subsp. xyli (strain CTCB07), this protein is Non-homologous end joining protein Ku.